A 270-amino-acid polypeptide reads, in one-letter code: Tryptophan synthase alpha chain (270 aa).

Active-site proton acceptor residues include E49 and D60.

Belongs to the TrpA family. As to quaternary structure, tetramer of two alpha and two beta chains.

The enzyme catalyses (1S,2R)-1-C-(indol-3-yl)glycerol 3-phosphate + L-serine = D-glyceraldehyde 3-phosphate + L-tryptophan + H2O. It participates in amino-acid biosynthesis; L-tryptophan biosynthesis; L-tryptophan from chorismate: step 5/5. In terms of biological role, the alpha subunit is responsible for the aldol cleavage of indoleglycerol phosphate to indole and glyceraldehyde 3-phosphate. The sequence is that of Tryptophan synthase alpha chain from Buchnera aphidicola subsp. Melaphis rhois.